Consider the following 200-residue polypeptide: Interleukin 17-like protein (200 aa).

A signal peptide spans 1–26 (MGNFFLFAMTLVVCSVIVLLTGVADS). Asparagine 46 is a glycosylation site (N-linked (GlcNAc...) asparagine). Cystine bridges form between cysteine 122–cysteine 175 and cysteine 127–cysteine 177. An N-linked (GlcNAc...) asparagine glycan is attached at asparagine 192.

The protein belongs to the IL-17 family. In terms of tissue distribution, expressed in several tissues including hemocytes, gills, mantle, adductor muscle, labial palps, digestive glands and heart with highest levels in gills and lowest levels in adductor muscle and heart.

Its subcellular location is the secreted. This chain is Interleukin 17-like protein, found in Magallana gigas (Pacific oyster).